A 294-amino-acid polypeptide reads, in one-letter code: MSQAFRTLALLGKANNDDVNQTINALYKFLREQNYNVLTETRLAHQLPCPAEHCMDIVELGKNADLAIVVGGDGHMLGAARVLARYDVPVIGVNRGNLGFLTDLSPHDFEVSLQQVLSGDYQTEHRFLLETTIYRHGEPKSSNTALNEAVLHPGKIAHMIEYSVYIDDSFVFSQRADGMIVSTPTGSTAYALSAGGPILMPQLDVMTLVPMFPHTLSCRPIVIDAHRQVKLVISPDNPDEQLHVSCDGHVTLSVHPGDEIIIRRAPHQLTLLHPKDYDYFNVLRTKLGWSNQLF.

Asp73 functions as the Proton acceptor in the catalytic mechanism. NAD(+) contacts are provided by residues 73–74, 147–148, His158, Arg175, Asp177, and 188–193; these read DG, NE, and TAYALS.

Belongs to the NAD kinase family. Requires a divalent metal cation as cofactor.

It is found in the cytoplasm. The catalysed reaction is NAD(+) + ATP = ADP + NADP(+) + H(+). Its function is as follows. Involved in the regulation of the intracellular balance of NAD and NADP, and is a key enzyme in the biosynthesis of NADP. Catalyzes specifically the phosphorylation on 2'-hydroxyl of the adenosine moiety of NAD to yield NADP. This chain is NAD kinase, found in Tolumonas auensis (strain DSM 9187 / NBRC 110442 / TA 4).